Consider the following 177-residue polypeptide: ATP synthase subunit delta (177 aa).

The protein belongs to the ATPase delta chain family. F-type ATPases have 2 components, F(1) - the catalytic core - and F(0) - the membrane proton channel. F(1) has five subunits: alpha(3), beta(3), gamma(1), delta(1), epsilon(1). F(0) has three main subunits: a(1), b(2) and c(10-14). The alpha and beta chains form an alternating ring which encloses part of the gamma chain. F(1) is attached to F(0) by a central stalk formed by the gamma and epsilon chains, while a peripheral stalk is formed by the delta and b chains.

The protein localises to the cell inner membrane. Its function is as follows. F(1)F(0) ATP synthase produces ATP from ADP in the presence of a proton or sodium gradient. F-type ATPases consist of two structural domains, F(1) containing the extramembraneous catalytic core and F(0) containing the membrane proton channel, linked together by a central stalk and a peripheral stalk. During catalysis, ATP synthesis in the catalytic domain of F(1) is coupled via a rotary mechanism of the central stalk subunits to proton translocation. In terms of biological role, this protein is part of the stalk that links CF(0) to CF(1). It either transmits conformational changes from CF(0) to CF(1) or is implicated in proton conduction. This is ATP synthase subunit delta from Shewanella pealeana (strain ATCC 700345 / ANG-SQ1).